A 303-amino-acid polypeptide reads, in one-letter code: WD repeat-containing protein 38 (303 aa).

7 WD repeats span residues 24-63 (QHHG…LLWR), 66-105 (GHRG…CLHV), 108-147 (GHQR…RVHL), 150-189 (GHCD…PVVS), 195-233 (GHTG…LPLQ), 236-277 (GHTI…ETLK), and 279-303 (MLDV…AVTR).

The protein is WD repeat-containing protein 38 (Wdr38) of Mus musculus (Mouse).